We begin with the raw amino-acid sequence, 296 residues long: Nitrogenase iron protein 2 (296 aa).

Position 11-18 (11-18 (GKGGIGKS)) interacts with ATP. Residue C99 coordinates [4Fe-4S] cluster. R102 is modified (ADP-ribosylarginine; by dinitrogenase reductase ADP-ribosyltransferase). C133 contacts [4Fe-4S] cluster.

It belongs to the NifH/BchL/ChlL family. Homodimer. [4Fe-4S] cluster is required as a cofactor. In terms of processing, the reversible ADP-ribosylation of Arg-102 inactivates the nitrogenase reductase and regulates nitrogenase activity.

It carries out the reaction N2 + 8 reduced [2Fe-2S]-[ferredoxin] + 16 ATP + 16 H2O = H2 + 8 oxidized [2Fe-2S]-[ferredoxin] + 2 NH4(+) + 16 ADP + 16 phosphate + 6 H(+). Functionally, the key enzymatic reactions in nitrogen fixation are catalyzed by the nitrogenase complex, which has 2 components: the iron protein and the molybdenum-iron protein. The sequence is that of Nitrogenase iron protein 2 (nifH2) from Azorhizobium caulinodans (strain ATCC 43989 / DSM 5975 / JCM 20966 / LMG 6465 / NBRC 14845 / NCIMB 13405 / ORS 571).